Here is a 620-residue protein sequence, read N- to C-terminus: Glutathione-regulated potassium-efflux system protein KefC (620 aa).

The next 12 helical transmembrane spans lie at 4–24 (HTLI…PIAV), 26–46 (LGLG…PWGL), 54–74 (SILH…GLEL), 90–110 (GALQ…LLGL), 114–134 (VAEL…MQAM), 149–169 (FAVL…IPLL), 178–198 (MGAF…VVLL), 218–238 (VFSA…EEVG), 270–290 (GLLL…GTLL), 294–314 (LRIV…LWLI), 327–347 (WFAV…GAAQ), and 359–379 (SLTL…VILN). Residues 399–518 (QPRVIIAGFG…AGVEKPERET (120 aa)) form the RCK N-terminal domain. A disordered region spans residues 597-620 (GWQGTEEGKHTGNMADEPETKPSS).

It belongs to the monovalent cation:proton antiporter 2 (CPA2) transporter (TC 2.A.37) family. KefC subfamily. In terms of assembly, homodimer. Interacts with the regulatory subunit KefF.

It localises to the cell inner membrane. Its function is as follows. Pore-forming subunit of a potassium efflux system that confers protection against electrophiles. Catalyzes K(+)/H(+) antiport. This is Glutathione-regulated potassium-efflux system protein KefC from Escherichia coli O7:K1 (strain IAI39 / ExPEC).